The chain runs to 375 residues: MRWYSYVIPAVILSIIAISGVWWNATLGTRLDQKVQLFLNEHSSILNAVYETTTIVYTEPLHTSVSETITSTSFVTETTTVTPTVTATAQELSTLNPHPENSKIVLLMGSNAQNDPSSPLNPYIRTIIKNRRDYAERHGFKFEFLDLDEYKPSIGDKPAPWAKIPMIKNVIRKYPDAEWVWWLDHDALIMNRDLNLVDHILKHEKLNSLLLRDTEYFSGFGIDSEGFRTPKNQDPDDIHFIIAQDFNGINAGSFLIRNSEVGTWMLDFWNEPLYKEHNGVFVEQQALSHMIYSHPIVHKHVGLVTLRSINAYDSSDPAWGYEDGDLCVHFAGCFVFQTCAQNFEKYGKIITEKQGHDWFDPSEKEYIEQRLFPQP.

The Cytoplasmic segment spans residues Met1–Arg2. A helical; Signal-anchor for type II membrane protein membrane pass occupies residues Trp3–Trp23. At Asn24–Pro375 the chain is on the lumenal side.

It belongs to the glycosyltransferase 34 family.

The protein resides in the endoplasmic reticulum membrane. The protein localises to the golgi apparatus membrane. This is an uncharacterized protein from Schizosaccharomyces pombe (strain 972 / ATCC 24843) (Fission yeast).